A 431-amino-acid polypeptide reads, in one-letter code: 23S rRNA (uracil(1939)-C(5))-methyltransferase RlmD (431 aa).

The TRAM domain occupies 8-68; the sequence is KRRVTTRQII…SKYSRGQVKR (61 aa). [4Fe-4S] cluster is bound by residues Cys-81, Cys-87, Cys-90, and Cys-162. Residues Gln-265, Phe-294, Asn-299, Glu-315, Asn-342, and Asp-363 each coordinate S-adenosyl-L-methionine. The active-site Nucleophile is Cys-389.

It belongs to the class I-like SAM-binding methyltransferase superfamily. RNA M5U methyltransferase family. RlmD subfamily.

The catalysed reaction is uridine(1939) in 23S rRNA + S-adenosyl-L-methionine = 5-methyluridine(1939) in 23S rRNA + S-adenosyl-L-homocysteine + H(+). Functionally, catalyzes the formation of 5-methyl-uridine at position 1939 (m5U1939) in 23S rRNA. This Enterobacter sp. (strain 638) protein is 23S rRNA (uracil(1939)-C(5))-methyltransferase RlmD.